The sequence spans 131 residues: Serum amyloid A-3 protein (131 aa).

The signal sequence occupies residues 1–18; sequence MNLSTGIIFCFLILGVSS. Residues 94-105 show a composition bias toward basic and acidic residues; it reads MTRDQVREDSKA. Positions 94–131 are disordered; sequence MTRDQVREDSKADQFANEWGRSGKDPNHFRPAGLPDKY.

Belongs to the SAA family. Expressed in the liver. Expressed in mammary epithelial cells. Expressed at high levels in mammary ductal cells and vesicle engorged alveoli, but absent from stromal and connective tissue and leukocytes. Secreted into colostrum and mastitic milk (at protein level). Low expression levels, if any, in normal milk (at protein level).

Its subcellular location is the secreted. Its function is as follows. Major acute phase reactant. Apolipoprotein of the HDL complex. May have a role in protection of the mammary gland during remodeling and infection. In vitro exhibits antimicrobial activity against Escherichia coli, Streptococcus uberis and Pseudomonas aeruginosa. The protein is Serum amyloid A-3 protein (SAA3) of Bos taurus (Bovine).